The sequence spans 171 residues: Ribosome maturation factor RimM (171 aa).

Positions 97–170 (EGEYYYHEVI…QVTIHVMEGL (74 aa)) constitute a PRC barrel domain.

The protein belongs to the RimM family. In terms of assembly, binds ribosomal protein uS19.

The protein resides in the cytoplasm. In terms of biological role, an accessory protein needed during the final step in the assembly of 30S ribosomal subunit, possibly for assembly of the head region. Essential for efficient processing of 16S rRNA. May be needed both before and after RbfA during the maturation of 16S rRNA. It has affinity for free ribosomal 30S subunits but not for 70S ribosomes. This is Ribosome maturation factor RimM from Bacillus cytotoxicus (strain DSM 22905 / CIP 110041 / 391-98 / NVH 391-98).